A 427-amino-acid polypeptide reads, in one-letter code: Transcobalamin-2 (427 aa).

The N-terminal stretch at 1–18 (MRHLGALLFLLGVLGALA) is a signal peptide. Disulfide bonds link Cys-21-Cys-267, Cys-116-Cys-309, and Cys-165-Cys-205. Residues Gln-104, 152 to 156 (TSYYQ), His-190, 190 to 194 (HHSVD), Asn-242, Ser-245, Gln-291, and 395 to 397 (WQL) contribute to the cob(II)alamin site.

The protein belongs to the eukaryotic cobalamin transport proteins family. Interacts with CD320 (via LDL-receptor class A domains).

The protein resides in the secreted. Functionally, primary vitamin B12-binding and transport protein. Delivers cobalamin to cells. This is Transcobalamin-2 (TCN2) from Pongo abelii (Sumatran orangutan).